A 344-amino-acid polypeptide reads, in one-letter code: Dihydroorotase (344 aa).

Zn(2+)-binding residues include His13 and His15. Residues 15–17 (HLR) and Asn41 each bind substrate. Positions 98, 135, and 173 each coordinate Zn(2+). N6-carboxylysine is present on Lys98. Residue His135 participates in substrate binding. Leu218 serves as a coordination point for substrate. Asp247 provides a ligand contact to Zn(2+). Asp247 is a catalytic residue. The substrate site is built by His251 and Ala263.

It belongs to the metallo-dependent hydrolases superfamily. DHOase family. Class II DHOase subfamily. In terms of assembly, homodimer. Zn(2+) serves as cofactor.

It catalyses the reaction (S)-dihydroorotate + H2O = N-carbamoyl-L-aspartate + H(+). The protein operates within pyrimidine metabolism; UMP biosynthesis via de novo pathway; (S)-dihydroorotate from bicarbonate: step 3/3. Catalyzes the reversible cyclization of carbamoyl aspartate to dihydroorotate. The sequence is that of Dihydroorotase from Neisseria meningitidis serogroup B (strain ATCC BAA-335 / MC58).